The primary structure comprises 351 residues: Dihydroorotate dehydrogenase (quinone) (351 aa).

Residues 61 to 65 (AGLDK) and T85 each bind FMN. A substrate-binding site is contributed by K65. 110–114 (NRMGF) is a binding site for substrate. Positions 139 and 172 each coordinate FMN. N172 provides a ligand contact to substrate. Residue S175 is the Nucleophile of the active site. Residue N177 coordinates substrate. FMN contacts are provided by K217 and T245. A substrate-binding site is contributed by 246-247 (NT). FMN is bound by residues G268, G297, and 318–319 (YS).

This sequence belongs to the dihydroorotate dehydrogenase family. Type 2 subfamily. In terms of assembly, monomer. The cofactor is FMN.

The protein resides in the cell membrane. It carries out the reaction (S)-dihydroorotate + a quinone = orotate + a quinol. It participates in pyrimidine metabolism; UMP biosynthesis via de novo pathway; orotate from (S)-dihydroorotate (quinone route): step 1/1. In terms of biological role, catalyzes the conversion of dihydroorotate to orotate with quinone as electron acceptor. This is Dihydroorotate dehydrogenase (quinone) from Xanthomonas euvesicatoria pv. vesicatoria (strain 85-10) (Xanthomonas campestris pv. vesicatoria).